Consider the following 515-residue polypeptide: Bifunctional purine biosynthesis protein PurH (515 aa).

Positions methionine 1 to valine 145 constitute an MGS-like domain.

The protein belongs to the PurH family.

The enzyme catalyses (6R)-10-formyltetrahydrofolate + 5-amino-1-(5-phospho-beta-D-ribosyl)imidazole-4-carboxamide = 5-formamido-1-(5-phospho-D-ribosyl)imidazole-4-carboxamide + (6S)-5,6,7,8-tetrahydrofolate. It carries out the reaction IMP + H2O = 5-formamido-1-(5-phospho-D-ribosyl)imidazole-4-carboxamide. The protein operates within purine metabolism; IMP biosynthesis via de novo pathway; 5-formamido-1-(5-phospho-D-ribosyl)imidazole-4-carboxamide from 5-amino-1-(5-phospho-D-ribosyl)imidazole-4-carboxamide (10-formyl THF route): step 1/1. Its pathway is purine metabolism; IMP biosynthesis via de novo pathway; IMP from 5-formamido-1-(5-phospho-D-ribosyl)imidazole-4-carboxamide: step 1/1. This chain is Bifunctional purine biosynthesis protein PurH, found in Streptococcus mutans serotype c (strain ATCC 700610 / UA159).